A 98-amino-acid chain; its full sequence is Citrate lyase acyl carrier protein (98 aa).

Position 14 is an O-(phosphoribosyl dephospho-coenzyme A)serine (serine 14).

It belongs to the CitD family. In terms of assembly, oligomer with a subunit composition of (alpha,beta,gamma)6.

The protein resides in the cytoplasm. In terms of biological role, covalent carrier of the coenzyme of citrate lyase. The protein is Citrate lyase acyl carrier protein of Escherichia coli O81 (strain ED1a).